An 872-amino-acid polypeptide reads, in one-letter code: Alanine--tRNA ligase (872 aa).

His-563, His-567, Cys-665, and His-669 together coordinate Zn(2+).

The protein belongs to the class-II aminoacyl-tRNA synthetase family. Requires Zn(2+) as cofactor.

The protein localises to the cytoplasm. It carries out the reaction tRNA(Ala) + L-alanine + ATP = L-alanyl-tRNA(Ala) + AMP + diphosphate. Functionally, catalyzes the attachment of alanine to tRNA(Ala) in a two-step reaction: alanine is first activated by ATP to form Ala-AMP and then transferred to the acceptor end of tRNA(Ala). Also edits incorrectly charged Ser-tRNA(Ala) and Gly-tRNA(Ala) via its editing domain. The sequence is that of Alanine--tRNA ligase from Bacteroides thetaiotaomicron (strain ATCC 29148 / DSM 2079 / JCM 5827 / CCUG 10774 / NCTC 10582 / VPI-5482 / E50).